We begin with the raw amino-acid sequence, 148 residues long: NADH-quinone oxidoreductase subunit A (148 aa).

A run of 3 helical transmembrane segments spans residues 14–34 (WAFA…LVGG), 68–88 (FYLV…LYAW), and 98–118 (VGFV…VYLV).

It belongs to the complex I subunit 3 family. In terms of assembly, NDH-1 is composed of 13 different subunits. Subunits NuoA, H, J, K, L, M, N constitute the membrane sector of the complex.

The protein localises to the cell inner membrane. It carries out the reaction a quinone + NADH + 5 H(+)(in) = a quinol + NAD(+) + 4 H(+)(out). In terms of biological role, NDH-1 shuttles electrons from NADH, via FMN and iron-sulfur (Fe-S) centers, to quinones in the respiratory chain. The immediate electron acceptor for the enzyme in this species is believed to be ubiquinone. Couples the redox reaction to proton translocation (for every two electrons transferred, four hydrogen ions are translocated across the cytoplasmic membrane), and thus conserves the redox energy in a proton gradient. In Klebsiella pneumoniae subsp. pneumoniae (strain ATCC 700721 / MGH 78578), this protein is NADH-quinone oxidoreductase subunit A.